A 568-amino-acid chain; its full sequence is Acetyl-coenzyme A carboxylase carboxyl transferase subunits beta/alpha (568 aa).

An acetyl-coenzyme A carboxylase carboxyl transferase subunit beta region spans residues Met-1–Gly-253. The region spanning Arg-21–Thr-290 is the CoA carboxyltransferase N-terminal domain. The carboxyltransferase stretch occupies residues Arg-21–Glu-536. Zn(2+) is bound by residues Cys-25, Cys-28, Cys-44, and Cys-47. The C4-type zinc-finger motif lies at Cys-25–Cys-47. The acetyl-coenzyme A carboxylase carboxyl transferase subunit alpha stretch occupies residues Met-254 to Pro-559. The 251-residue stretch at Arg-286–Glu-536 folds into the CoA carboxyltransferase C-terminal domain.

The protein in the N-terminal section; belongs to the AccD/PCCB family. This sequence in the C-terminal section; belongs to the AccA family. As to quaternary structure, acetyl-CoA carboxylase is a heterotetramer composed of biotin carboxyl carrier protein (AccB), biotin carboxylase (AccC) and two subunits of ACCase subunit beta/alpha. Zn(2+) is required as a cofactor.

The protein resides in the cytoplasm. It carries out the reaction N(6)-carboxybiotinyl-L-lysyl-[protein] + acetyl-CoA = N(6)-biotinyl-L-lysyl-[protein] + malonyl-CoA. The protein operates within lipid metabolism; malonyl-CoA biosynthesis; malonyl-CoA from acetyl-CoA: step 1/1. In terms of biological role, component of the acetyl coenzyme A carboxylase (ACC) complex. Biotin carboxylase (BC) catalyzes the carboxylation of biotin on its carrier protein (BCCP) and then the CO(2) group is transferred by the transcarboxylase to acetyl-CoA to form malonyl-CoA. In Saccharopolyspora erythraea (strain ATCC 11635 / DSM 40517 / JCM 4748 / NBRC 13426 / NCIMB 8594 / NRRL 2338), this protein is Acetyl-coenzyme A carboxylase carboxyl transferase subunits beta/alpha (accD).